The chain runs to 252 residues: Acetoacetate decarboxylase (252 aa).

Lysine 116 serves as the catalytic Schiff-base intermediate with acetoacetate.

It belongs to the ADC family.

The catalysed reaction is acetoacetate + H(+) = acetone + CO2. Catalyzes the conversion of acetoacetate to acetone and carbon dioxide. The protein is Acetoacetate decarboxylase of Paraburkholderia xenovorans (strain LB400).